A 212-amino-acid polypeptide reads, in one-letter code: Pyrrolidone-carboxylate peptidase (212 aa).

Residues Glu80, Cys143, and His165 contribute to the active site.

It belongs to the peptidase C15 family. As to quaternary structure, homotetramer.

It localises to the cytoplasm. The enzyme catalyses Release of an N-terminal pyroglutamyl group from a polypeptide, the second amino acid generally not being Pro.. In terms of biological role, removes 5-oxoproline from various penultimate amino acid residues except L-proline. This is Pyrrolidone-carboxylate peptidase from Vibrio campbellii (strain ATCC BAA-1116).